The sequence spans 259 residues: Dihydroorotate dehydrogenase B (NAD(+)), electron transfer subunit (259 aa).

Positions 2–102 (MQKQNMIVVN…LGPLGHGFPV (101 aa)) constitute an FAD-binding FR-type domain. Residues 53–56 (RPIS), 70–72 (LYR), and 77–78 (GT) contribute to the FAD site. Cysteine 221, cysteine 226, cysteine 229, and cysteine 246 together coordinate [2Fe-2S] cluster.

This sequence belongs to the PyrK family. As to quaternary structure, heterotetramer of 2 PyrK and 2 PyrD type B subunits. [2Fe-2S] cluster serves as cofactor. FAD is required as a cofactor.

It participates in pyrimidine metabolism; UMP biosynthesis via de novo pathway; orotate from (S)-dihydroorotate (NAD(+) route): step 1/1. Functionally, responsible for channeling the electrons from the oxidation of dihydroorotate from the FMN redox center in the PyrD type B subunit to the ultimate electron acceptor NAD(+). The chain is Dihydroorotate dehydrogenase B (NAD(+)), electron transfer subunit from Bacillus cereus (strain G9842).